Here is a 216-residue protein sequence, read N- to C-terminus: Transmembrane protein 163a (216 aa).

Topologically, residues M1 to A15 are cytoplasmic. A helical transmembrane segment spans residues L16–V36. Topologically, residues S37–A43 are extracellular. A helical membrane pass occupies residues S44–W64. Residues R65–R77 are Cytoplasmic-facing. The chain crosses the membrane as a helical span at residues E78–G98. At K99–D114 the chain is on the extracellular side. Residues F115–F135 traverse the membrane as a helical segment. Over M136–R144 the chain is Cytoplasmic. The chain crosses the membrane as a helical span at residues A145–I165. At S166–T182 the chain is on the extracellular side. The chain crosses the membrane as a helical span at residues I183 to I203. At P204–E216 the chain is on the cytoplasmic side.

This sequence belongs to the TMEM163 family.

It is found in the cytoplasmic vesicle. It localises to the secretory vesicle. The protein resides in the synaptic vesicle membrane. Its subcellular location is the early endosome membrane. The protein localises to the late endosome membrane. It is found in the lysosome membrane. It localises to the cell membrane. It catalyses the reaction Zn(2+)(in) = Zn(2+)(out). Its function is as follows. Zinc ion transporter that mediates zinc efflux and plays a crucial role in intracellular zinc homeostasis. Binds the divalent cations Zn(2+), Ni(2+), and to a minor extent Cu(2+). Is a functional modulator of P2X purinoceptors, including P2RX1, P2RX3, P2RX4 and P2RX7. Plays a role in central nervous system development and is required for myelination, and survival and proliferation of oligodendrocytes. This is Transmembrane protein 163a from Danio rerio (Zebrafish).